The following is a 450-amino-acid chain: FAD-dependent monooxygenase okaB (450 aa).

The helical transmembrane segment at 14–34 (IVIIIVGLGIAGLSAAIECHG) threads the bilayer. Positions 43 and 116 each coordinate FAD. Residue R194 is part of the active site. The FAD site is built by D318 and G331.

Belongs to the paxM FAD-dependent monooxygenase family.

Its subcellular location is the membrane. The enzyme catalyses cyclo(N(8)-(alpha,alpha-dimethylallyl)-L-Trp-6a-(alpha,alpha-dimethylallyl)-L-Trp) + AH2 + O2 = okaramine C + A + H2O. Its pathway is alkaloid biosynthesis. Its function is as follows. FAD-dependent monooxygenase; part of the gene cluster that mediates the biosynthesis of okaramine B, a prenylated indole alkaloid that possesses an unusual octacyclic ring system, including a four-membered azetidine ring and an eight-membered azocine ring, and that exhibits insecticidal activity against silkworm larvae. Within the pathway, okaC performs indole 2,3-epoxidation, facilitating the formation of the hexahydropyrrolo[2,3-b]indole (HPI) moiety of okaramine C. okaC then performs asymmetric reverse prenylation of cyclo(L-Trp-L-Trp) at N-1 and C-2' of the indole ring to produce the cyclic prenylated tryptophan dimer cyclo(N8-(alpha,alpha-dimethylallyl)-L-Trp-6a-(alpha,alpha-dime-thylallyl)-L-Trp). The biosynthesis begins with the NRPS okaA that condenses two tryptophan molecules into cyclo(L-Trp-L-Trp). Prenylation by the prenyltransferase okaC then leads to the formation of cyclo(N8-(alpha,alpha-dimethylallyl)-L-Trp-6a-(alpha,alpha-dime-thylallyl)-L-Trp). This is followed by indole 2,3-epoxidation by the FAD-dependent monooxygenase okaB to facilitate the formation of the hexahydropyrrolo[2,3-b]indole (HPI) moiety of okaramine C. The cytochrome P450 monooxygenase okaD then likely catalyzes formation of the eight-membered ring of okaramine A. The dioxygenase okaE further forms the unusual 2-dimethyl-3-methyl-azetidine ring to yield 12-deshydroxyl okaramine E, as well as the hydroxylation of 12-deshydroxyl okaramine E to produce okaramine E. The cytochrome P450 monoxygenase okaG converts 12-deshydroxyl okaramine E into 3-desmethyl okaramine B which is further methylated by the methyltransferase okaF into okaramine B. In a shunt pathway, okaG and okaF together are also able to convert okaramine E into okaramine D. Okaramine H is produced by nonenzymatic conversion from okaramine A. This is FAD-dependent monooxygenase okaB from Penicillium ochrochloron.